The following is a 375-amino-acid chain: Probable G-protein coupled receptor 27 (375 aa).

Residues 1 to 23 lie on the Extracellular side of the membrane; that stretch reads MANASEPGGSGGGEAAALGLKLA. A glycan (N-linked (GlcNAc...) asparagine) is linked at Asn3. A helical membrane pass occupies residues 24 to 44; that stretch reads TLSLLLCVSLAGNVLFALLIV. Residues 45 to 55 are Cytoplasmic-facing; sequence RERSLHRAPYY. A helical membrane pass occupies residues 56 to 76; it reads LLLDLCLADGLRALACLPAVM. At 77 to 97 the chain is on the extracellular side; it reads LAARRAAAAAGAPPGALGCKL. An intrachain disulfide couples Cys95 to Cys171. Residues 98–118 form a helical membrane-spanning segment; the sequence is LAFLAALFCFHAAFLLLGVGV. At 119–139 the chain is on the cytoplasmic side; sequence TRYLAIAHHRFYAERLAGWPC. A helical membrane pass occupies residues 140-160; that stretch reads AAMLVCAAWALALAAAFPPVL. Topologically, residues 161–181 are extracellular; that stretch reads DGGGDDEDAPCALEQRPDGAP. The helical transmembrane segment at 182 to 202 threads the bilayer; it reads GALGFLLLLAVVVGATHLVYL. The Cytoplasmic portion of the chain corresponds to 203 to 285; it reads RLLFFIHDRR…FKTEKRLCKM (83 aa). A helical transmembrane segment spans residues 286-306; the sequence is FYAVTLLFLLLWGPYVVASYL. Over 307–320 the chain is Extracellular; it reads RVLVRPGAVPQAYL. The helical transmembrane segment at 321–341 threads the bilayer; it reads TASVWLTFAQAGINPVVCFLF. The Cytoplasmic segment spans residues 342 to 375; the sequence is NRELRDCFRAQFPCCQSPRTTQATHPCDLKGIGL.

The protein belongs to the G-protein coupled receptor 1 family. As to expression, highly expressed as a 3.0 kb transcript in brain, ovary, testis, heart, prostate and peripheral Leukocytes. Lower levels in pancreas and small intestine. A 2.3 kb transcript was also found in peripheral Leukocytes. In brain regions, detected as a 3.0 kb transcript in all regions tested. Highest levels in the caudate nucleus, putamen, hippocampus and subthalamic nucleus. Lowest level in the cerebellum.

The protein resides in the cell membrane. Orphan receptor. Possible candidate for amine-like G-protein coupled receptor. The polypeptide is Probable G-protein coupled receptor 27 (GPR27) (Homo sapiens (Human)).